Consider the following 293-residue polypeptide: Fructose-bisphosphate aldolase (293 aa).

Residue Ser50 coordinates D-glyceraldehyde 3-phosphate. Asp85 (proton donor) is an active-site residue. His86, Asp106, Glu136, and His178 together coordinate Zn(2+). A dihydroxyacetone phosphate-binding site is contributed by Gly179. His208 is a binding site for Zn(2+). Residues 209–211 (GGS) and 230–233 (NVNT) contribute to the dihydroxyacetone phosphate site.

It belongs to the class II fructose-bisphosphate aldolase family. Zn(2+) serves as cofactor.

It carries out the reaction beta-D-fructose 1,6-bisphosphate = D-glyceraldehyde 3-phosphate + dihydroxyacetone phosphate. It functions in the pathway carbohydrate degradation; glycolysis; D-glyceraldehyde 3-phosphate and glycerone phosphate from D-glucose: step 4/4. Functionally, catalyzes the aldol condensation of dihydroxyacetone phosphate (DHAP or glycerone-phosphate) with glyceraldehyde 3-phosphate (G3P) to form fructose 1,6-bisphosphate (FBP) in gluconeogenesis and the reverse reaction in glycolysis. The sequence is that of Fructose-bisphosphate aldolase (fba) from Streptococcus pneumoniae serotype 4 (strain ATCC BAA-334 / TIGR4).